The primary structure comprises 336 residues: Glutamyl endopeptidase (336 aa).

A signal peptide spans 1–29; sequence MKGKFLKVSSLFVATLTTATLVSSPAANA. Positions 30-68 are excised as a propeptide; it reads LSSKAMDNHPQQTQSSKQQTPKIQKGGNLKPLEQREHAN. A disordered region spans residues 34 to 61; that stretch reads AMDNHPQQTQSSKQQTPKIQKGGNLKPL. A compositionally biased stretch (low complexity) spans 39–51; the sequence is PQQTQSSKQQTPK. Active-site charge relay system residues include His-119, Asp-161, and Ser-237. The segment at 283–336 is disordered; sequence FANDDQPNNPDNPDNPNNPDNPNNPDEPNNPDNPNNPDNPDNGDNNNSDNPDAA. Residues 286-336 show a composition bias toward low complexity; sequence DDQPNNPDNPDNPNNPDNPNNPDEPNNPDNPNNPDNPDNGDNNNSDNPDAA. 11 consecutive repeat copies span residues 289 to 291, 292 to 294, 295 to 297, 298 to 300, 301 to 303, 304 to 306, 310 to 312, 313 to 315, 316 to 318, 319 to 321, and 322 to 324. Residues 289-324 form an 11 X 3 AA repeats of P-[DN]-N region; it reads PNNPDNPDNPNNPDNPNNPDEPNNPDNPNNPDNPDN.

This sequence belongs to the peptidase S1B family. In terms of processing, proteolytically cleaved by aureolysin (aur). This cleavage leads to the activation of SspA.

The protein resides in the secreted. It catalyses the reaction Preferential cleavage: Glu-|-Xaa, Asp-|-Xaa.. Preferentially cleaves peptide bonds on the carboxyl-terminal side of aspartate and glutamate. Along with other extracellular proteases it is involved in colonization and infection of human tissues. Required for proteolytic maturation of thiol protease SspB and inactivation of SspC, an inhibitor of SspB. It is the most important protease for degradation of fibronectin-binding protein (FnBP) and surface protein A, which are involved in adherence to host cells. May also protect bacteria against host defense mechanism by cleaving the immunoglobulin classes IgG, IgA and IgM. May be involved in the stability of secreted lipases. The protein is Glutamyl endopeptidase (sspA) of Staphylococcus aureus (strain NCTC 8325 / PS 47).